The primary structure comprises 1790 residues: MPTSDKSRQTSAGKSFFGRKLHKERPVEDRWDAHGSWESLAPPSSAAGSRSSRYSKRSSIQSVDFGADIDPSLLSTSAGPITSIPFESLSTDTQSPIPVDYLSKAETSPRKEPSPGHLAKGVGDFHQYPAWDPSAMRNHQQFSHPTGPRPPPHAAGVAMSSSATGDKGARYQQWGRPGSSAGNAGLSHHSSSTVDSSTNSRMSIDQASIHSSLSSNTRGSSYISTDGSSRTTLPSHSNDRSNYYAAMNSGRGSSAQGAIPPAQPRVQNTEQYLTRPRDDRVVDQLFLELMQKRGWQNLPEQARRQMMAYPASKKWTLVHQDRLTELQGEQKRKQKARETHGYDGPSGILERADEEGSPEWYVKKVMDDTITSKQLASLSVSLRTQPISWVKAFVEAQGQIALTNVLVKINRKKVTGPVPAPPSGDKDLDREYDIVKCLKALMNNKYGADDALAHQQIIVALISSLLSPRLNTRKLVSEVLTFLCHWAEGQGHERVLQAMDHVKNHQGETGRFDAWMRIVEVTIDGRGKMGSLVGASEEYRSGGIGMENLLMEYAVSTMILINMLVDAPENDLQLRCHIRAQFISCGIKRLLSKMEGFQYEVIDKQIEHFRENEAIDYEDLLQRESSSTKDSIEGEVKDMTDPLQITDAIASRLNGTRAHDYFLSALQHLLLIRENSGEDGLRMYQLVDAMLSYVAMDRRLPDLDLRQGLTFTVQSLLDRLHTDAEARRAYDESLEARQIAEAALAERDEMKAQVELGADGLVRKLQKQIEEQTGIIELQSRQNEMLKAELADVQRLRAQELQRNELETRELYLMLRDAQDIAASNAKKSNMGEAETDPAHMRGILDREKLLTRLEKQLERTKTQFKLEGKVWGQHDPSDRLRELREQMDGDAGPREAFEEQARLNLSLNPVGSVYRKKTYIQGMEDTATEELGQTDDEVVYAKARLVDLHRPRMDPEQATGLLGEIAAKVPKIDADDAKDEGKPTESEQPAEGAATKGDEQGVDDTVAVDKATAAPPPPPPPPPAHPGLSGAAPPPPPPPPPPPPGAGAAPPPPPPPPPPPPGGLGGPPPPPPPPPPGGFGGPPPPPPPPGGFGGPPPPPPPPPGGAFGVPPPPPPPGTVIGGWRANYLASQGAPSHAIPVMSSIRPKKKLKALHWDKVDTPQVTVWATHGTTPQEKEEKYVELAKRGVLDEVERLFMAKETRIFGGGVAAKQRKDKKQIISNDLSKNFQIALSKFSQFPAEEVVRRIIHCDAEILDNMVVMEFLQRDEMCTVPENVSKLMAPYSKDWTGPDAANTEREQDPSELTREDQIYLYTAFELNHYWKARMRALALTRSFEPDYEHISAKLREVVRVSESLRDSVSLMNVLGLILDIGNFMNDANKQAQGFKLSSLARLGMVKDDKNETTFADLVERIVRNQYPEWEDFTEQISGVIGLQKLNVDQLRTDAKKYIDNIKNVQASLDAGNLSDPKKFHPQDRVSQITQRSMKDARRKAEQMQLYLEEMVKTYDDIMVFYGEDNTDDGARRDFFAKLAAFLQEWKKSKEKNIALEEARRRTEASLARKRINVGLANGAGAAGDAPVSPATSGAMDSLLEKLRAAAPQAKDQRDRRRRARLKERHQVRVASGQKIPDLEGAEAPGSGGQNSGATDTNATDSSLLSPTIQEPEGGSSPIASQSEDVADRAASMLQDMLRNSPDPERTRRRRESAEEERRKRRLRRRNGATSGSKDSNDTTPLSPVTEPTSTQGESAEPENLSLSSPPNGEDPTLNPPTIVLSSDASDTPDDEHRPSTS.

Disordered regions lie at residues 1 to 275 (MPTS…YLTR) and 328 to 350 (GEQK…GILE). The span at 24–35 (ERPVEDRWDAHG) shows a compositional bias: basic and acidic residues. Low complexity-rich tracts occupy residues 39–62 (SLAP…SIQS) and 187–203 (SHHS…SRMS). Residues 205-236 (DQASIHSSLSSNTRGSSYISTDGSSRTTLPSH) show a composition bias toward polar residues. Residues 274 to 702 (TRPRDDRVVD…YVAMDRRLPD (429 aa)) enclose the GBD/FH3 domain. Residues 328–341 (GEQKRKQKARETHG) show a composition bias toward basic and acidic residues. Residues 724 to 811 (AEARRAYDES…QRNELETREL (88 aa)) adopt a coiled-coil conformation. An FH1 domain is found at 955 to 1136 (DPEQATGLLG…NYLASQGAPS (182 aa)). A compositionally biased stretch (basic and acidic residues) spans 975 to 986 (ADDAKDEGKPTE). Disordered stretches follow at residues 975–1119 (ADDA…PPGT), 1465–1484 (NLSD…ITQR), and 1596–1790 (RAAA…PSTS). Composition is skewed to pro residues over residues 1015–1026 (APPPPPPPPPAH) and 1033–1118 (APPP…PPPG). One can recognise an FH2 domain in the interval 1141–1564 (VMSSIRPKKK…TEASLARKRI (424 aa)). Residues 1435 to 1566 (LQKLNVDQLR…ASLARKRINV (132 aa)) are a coiled coil. The DAD domain occupies 1581 to 1613 (SPATSGAMDSLLEKLRAAAPQAKDQRDRRRRAR). A compositionally biased stretch (basic residues) spans 1608-1620 (RRRRARLKERHQV). The segment covering 1644-1661 (SGATDTNATDSSLLSPTI) has biased composition (polar residues). Residues 1694-1710 (PDPERTRRRRESAEEER) show a composition bias toward basic and acidic residues. Over residues 1720-1746 (GATSGSKDSNDTTPLSPVTEPTSTQGE) the composition is skewed to polar residues.

It belongs to the formin homology family. BNI1 subfamily.

Involved in cytokinesis. Overexpression results in growth inhibition. In Emericella nidulans (strain FGSC A4 / ATCC 38163 / CBS 112.46 / NRRL 194 / M139) (Aspergillus nidulans), this protein is Cytokinesis protein sepA (sepA).